Reading from the N-terminus, the 275-residue chain is Exosome complex component Rrp42 (275 aa).

It belongs to the RNase PH family. Rrp42 subfamily. Component of the archaeal exosome complex. Forms a hexameric ring-like arrangement composed of 3 Rrp41-Rrp42 heterodimers. The hexameric ring associates with a trimer of Rrp4 and/or Csl4 subunits.

The protein resides in the cytoplasm. Functionally, non-catalytic component of the exosome, which is a complex involved in RNA degradation. Contributes to the structuring of the Rrp41 active site. This Saccharolobus islandicus (strain M.16.27) (Sulfolobus islandicus) protein is Exosome complex component Rrp42.